The primary structure comprises 557 residues: 2-succinyl-5-enolpyruvyl-6-hydroxy-3-cyclohexene-1-carboxylate synthase (557 aa).

The protein belongs to the TPP enzyme family. MenD subfamily. Homodimer. Mg(2+) is required as a cofactor. Requires Mn(2+) as cofactor. It depends on thiamine diphosphate as a cofactor.

It catalyses the reaction isochorismate + 2-oxoglutarate + H(+) = 5-enolpyruvoyl-6-hydroxy-2-succinyl-cyclohex-3-ene-1-carboxylate + CO2. It participates in quinol/quinone metabolism; 1,4-dihydroxy-2-naphthoate biosynthesis; 1,4-dihydroxy-2-naphthoate from chorismate: step 2/7. It functions in the pathway quinol/quinone metabolism; menaquinone biosynthesis. Catalyzes the thiamine diphosphate-dependent decarboxylation of 2-oxoglutarate and the subsequent addition of the resulting succinic semialdehyde-thiamine pyrophosphate anion to isochorismate to yield 2-succinyl-5-enolpyruvyl-6-hydroxy-3-cyclohexene-1-carboxylate (SEPHCHC). The protein is 2-succinyl-5-enolpyruvyl-6-hydroxy-3-cyclohexene-1-carboxylate synthase of Staphylococcus aureus (strain MRSA252).